Reading from the N-terminus, the 210-residue chain is Peptidyl-tRNA hydrolase (210 aa).

Residue tyrosine 30 participates in tRNA binding. The active-site Proton acceptor is the histidine 35. 3 residues coordinate tRNA: tyrosine 81, asparagine 83, and asparagine 129.

This sequence belongs to the PTH family. In terms of assembly, monomer.

Its subcellular location is the cytoplasm. The enzyme catalyses an N-acyl-L-alpha-aminoacyl-tRNA + H2O = an N-acyl-L-amino acid + a tRNA + H(+). Functionally, hydrolyzes ribosome-free peptidyl-tRNAs (with 1 or more amino acids incorporated), which drop off the ribosome during protein synthesis, or as a result of ribosome stalling. In terms of biological role, catalyzes the release of premature peptidyl moieties from peptidyl-tRNA molecules trapped in stalled 50S ribosomal subunits, and thus maintains levels of free tRNAs and 50S ribosomes. The polypeptide is Peptidyl-tRNA hydrolase (Bordetella petrii (strain ATCC BAA-461 / DSM 12804 / CCUG 43448)).